Reading from the N-terminus, the 311-residue chain is Olfactory receptor 1073 (311 aa).

Topologically, residues 1 to 25 are extracellular; sequence MKQQNDTQILQFLLLGLSENTELQP. Residue asparagine 5 is glycosylated (N-linked (GlcNAc...) asparagine). The chain crosses the membrane as a helical span at residues 26-46; the sequence is LIYWLFFSMYLVTVWGNLIII. Over 47–57 the chain is Cytoplasmic; sequence LATVLDFRLHT. A helical membrane pass occupies residues 58–78; that stretch reads AMYFFLCNLSFVDICLISTTI. At 79–97 the chain is on the extracellular side; the sequence is PKMLANVHLNHKAITYEGC. Cysteine 97 and cysteine 179 are disulfide-bonded. A helical transmembrane segment spans residues 98–118; it reads IMQIYFFTLFVGLDNFLLAVM. At 119–133 the chain is on the cytoplasmic side; sequence AYDRFVAICHPLRYT. Residues 134–154 form a helical membrane-spanning segment; sequence SIMTPHLCMSLVLVSWIASVL. An N-linked (GlcNAc...) asparagine glycan is attached at asparagine 155. Topologically, residues 155–196 are extracellular; sequence NSSLQSFLVLQLSFCTEVEIPHFFCELSMLVHLACSDTFLSD. The chain crosses the membrane as a helical span at residues 197-217; the sequence is MAMNVLAALLGGGCLVGILYS. Residues 218 to 244 are Cytoplasmic-facing; that stretch reads YSKIVSSIQAISSAEGKYKAFSTCVSH. The helical transmembrane segment at 245-265 threads the bilayer; it reads LSVVSLFYCTLLGVYLSSAVT. At 266-271 the chain is on the extracellular side; the sequence is QNSHST. The chain crosses the membrane as a helical span at residues 272 to 292; the sequence is AATSLMYTVVTPMLNPFIYSL. Residues 293 to 311 are Cytoplasmic-facing; the sequence is RNDNIKRALKNFVKKKLEK.

This sequence belongs to the G-protein coupled receptor 1 family. In terms of tissue distribution, tongue specific.

Its subcellular location is the cell membrane. In terms of biological role, possible taste receptor. This is Olfactory receptor 1073 (Olr1073) from Rattus norvegicus (Rat).